The sequence spans 116 residues: Large ribosomal subunit protein bL17 (116 aa).

The protein belongs to the bacterial ribosomal protein bL17 family. In terms of assembly, part of the 50S ribosomal subunit. Contacts protein L32.

The polypeptide is Large ribosomal subunit protein bL17 (Synechococcus sp. (strain WH7803)).